We begin with the raw amino-acid sequence, 92 residues long: Small ribosomal subunit protein uS19 (92 aa).

This sequence belongs to the universal ribosomal protein uS19 family.

Protein S19 forms a complex with S13 that binds strongly to the 16S ribosomal RNA. In Bacillus licheniformis (strain ATCC 14580 / DSM 13 / JCM 2505 / CCUG 7422 / NBRC 12200 / NCIMB 9375 / NCTC 10341 / NRRL NRS-1264 / Gibson 46), this protein is Small ribosomal subunit protein uS19.